We begin with the raw amino-acid sequence, 1427 residues long: Lysophospholipase NTE1 (1427 aa).

Over 1–60 (MDSLHVSSTSVLVDVVEAVETATSLVVDTAEAVATEQATPTAVISNALARSAYAAHTSLS) the chain is Cytoplasmic. Residues 61-81 (YLAWAFGLWFLRLIGWVCYGI) traverse the membrane as a helical segment. Residues 82 to 96 (PTYVLGLLGRTINIS) are Lumenal-facing. The chain crosses the membrane as a helical span at residues 97-117 (LQFSSLLLILIALVTVVVAVV). The Cytoplasmic segment spans residues 118–1427 (RYKYLTVYSR…KRTIARRNSI (1310 aa)). Over residues 281–296 (PMTSASDVPNMSLSSD) the composition is skewed to polar residues. The disordered stretch occupies residues 281 to 315 (PMTSASDVPNMSLSSDGSDDLQKGEPQFGEPRLSE). A nucleoside 3',5'-cyclic phosphate is bound by residues 615–735 (LMAA…LTKV) and 731–870 (SLTK…VASR). The tract at residues 787–807 (GIVGGESGDAKDGKSHRKNLT) is disordered. Positions 1124-1288 (LVLGGGGARG…VDNLPVSEMK (165 aa)) constitute a PNPLA domain. A GXGXXG motif is present at residues 1128–1133 (GGGARG). Positions 1155 to 1159 (GTSIG) match the GXSXG motif. Residue serine 1157 is the Nucleophile of the active site. Catalysis depends on aspartate 1275, which acts as the Proton acceptor. The short motif at 1275-1277 (DGG) is the DGA/G element.

It belongs to the NTE family.

It localises to the endoplasmic reticulum membrane. The catalysed reaction is a 1-acyl-sn-glycero-3-phosphocholine + H2O = sn-glycerol 3-phosphocholine + a fatty acid + H(+). Inhibited by organophosphorus esters. In terms of biological role, intracellular phospholipase B that catalyzes the double deacylation of phosphatidylcholine (PC) to glycerophosphocholine (GroPCho). Plays an important role in membrane lipid homeostasis. Responsible for the rapid PC turnover in response to inositol, elevated temperatures, or when choline is present in the growth medium. The polypeptide is Lysophospholipase NTE1 (NTE1) (Yarrowia lipolytica (strain CLIB 122 / E 150) (Yeast)).